The chain runs to 338 residues: Lipoate-protein ligase A (338 aa).

The BPL/LPL catalytic domain occupies 29–216 (PATQRVLFLW…AFFAHYGERV (188 aa)). Residues R71, 76 to 79 (GAVF), and K134 each bind ATP. K134 is a (R)-lipoate binding site.

Belongs to the LplA family. Monomer.

Its subcellular location is the cytoplasm. The enzyme catalyses L-lysyl-[lipoyl-carrier protein] + (R)-lipoate + ATP = N(6)-[(R)-lipoyl]-L-lysyl-[lipoyl-carrier protein] + AMP + diphosphate + H(+). It functions in the pathway protein modification; protein lipoylation via exogenous pathway; protein N(6)-(lipoyl)lysine from lipoate: step 1/2. Its pathway is protein modification; protein lipoylation via exogenous pathway; protein N(6)-(lipoyl)lysine from lipoate: step 2/2. In terms of biological role, catalyzes both the ATP-dependent activation of exogenously supplied lipoate to lipoyl-AMP and the transfer of the activated lipoyl onto the lipoyl domains of lipoate-dependent enzymes. The sequence is that of Lipoate-protein ligase A from Shigella sonnei (strain Ss046).